The primary structure comprises 131 residues: D-ribose pyranase (131 aa).

H20 functions as the Proton donor in the catalytic mechanism. Residues D28, H98, and 120–122 each bind substrate; that span reads YAN.

Belongs to the RbsD / FucU family. RbsD subfamily. In terms of assembly, homodecamer.

The protein resides in the cytoplasm. It carries out the reaction beta-D-ribopyranose = beta-D-ribofuranose. It participates in carbohydrate metabolism; D-ribose degradation; D-ribose 5-phosphate from beta-D-ribopyranose: step 1/2. In terms of biological role, catalyzes the interconversion of beta-pyran and beta-furan forms of D-ribose. The protein is D-ribose pyranase of Clostridium botulinum (strain Eklund 17B / Type B).